Here is a 168-residue protein sequence, read N- to C-terminus: Photosystem I assembly protein Ycf3 (168 aa).

TPR repeat units lie at residues 35–68 (AFTY…EIDP), 72–105 (SYIL…NPFL), and 120–153 (GEQA…TPGN).

Belongs to the Ycf3 family.

The protein resides in the plastid. The protein localises to the chloroplast thylakoid membrane. In terms of biological role, essential for the assembly of the photosystem I (PSI) complex. May act as a chaperone-like factor to guide the assembly of the PSI subunits. The sequence is that of Photosystem I assembly protein Ycf3 from Solanum tuberosum (Potato).